Here is a 276-residue protein sequence, read N- to C-terminus: Mitochondrial distribution and morphology protein 12 (276 aa).

Positions 1–276 (MSIDIQWNLL…FVWPSYFTLY (276 aa)) constitute an SMP-LTD domain. Residues 68–104 (TLYSDDSSSLDDEESDREEENMTELPPYGATENGVHK) are disordered. The segment covering 75-89 (SSLDDEESDREEENM) has biased composition (acidic residues).

Belongs to the MDM12 family. Component of the ER-mitochondria encounter structure (ERMES) or MDM complex, composed of mmm1, mdm10, mdm12 and mdm34. A mmm1 homodimer associates with one molecule of mdm12 on each side in a pairwise head-to-tail manner, and the SMP-LTD domains of mmm1 and mdm12 generate a continuous hydrophobic tunnel for phospholipid trafficking.

The protein localises to the mitochondrion outer membrane. Its subcellular location is the endoplasmic reticulum membrane. Component of the ERMES/MDM complex, which serves as a molecular tether to connect the endoplasmic reticulum (ER) and mitochondria. Components of this complex are involved in the control of mitochondrial shape and protein biogenesis, and function in nonvesicular lipid trafficking between the ER and mitochondria. Mdm12 is required for the interaction of the ER-resident membrane protein mmm1 and the outer mitochondrial membrane-resident beta-barrel protein mdm10. The mdm12-mmm1 subcomplex functions in the major beta-barrel assembly pathway that is responsible for biogenesis of all mitochondrial outer membrane beta-barrel proteins, and acts in a late step after the SAM complex. The mdm10-mdm12-mmm1 subcomplex further acts in the TOM40-specific pathway after the action of the mdm12-mmm1 complex. Essential for establishing and maintaining the structure of mitochondria and maintenance of mtDNA nucleoids. This Schizosaccharomyces japonicus (strain yFS275 / FY16936) (Fission yeast) protein is Mitochondrial distribution and morphology protein 12.